The primary structure comprises 264 residues: Thymidylate synthase (264 aa).

Position 21 (arginine 21) interacts with dUMP. Residue histidine 51 participates in (6R)-5,10-methylene-5,6,7,8-tetrahydrofolate binding. 126-127 (RR) contributes to the dUMP binding site. Cysteine 146 serves as the catalytic Nucleophile. DUMP contacts are provided by residues 166-169 (RSAD), asparagine 177, and 207-209 (HLY). Position 169 (aspartate 169) interacts with (6R)-5,10-methylene-5,6,7,8-tetrahydrofolate. A (6R)-5,10-methylene-5,6,7,8-tetrahydrofolate-binding site is contributed by alanine 263.

The protein belongs to the thymidylate synthase family. Bacterial-type ThyA subfamily. As to quaternary structure, homodimer.

It is found in the cytoplasm. The catalysed reaction is dUMP + (6R)-5,10-methylene-5,6,7,8-tetrahydrofolate = 7,8-dihydrofolate + dTMP. Its pathway is pyrimidine metabolism; dTTP biosynthesis. Functionally, catalyzes the reductive methylation of 2'-deoxyuridine-5'-monophosphate (dUMP) to 2'-deoxythymidine-5'-monophosphate (dTMP) while utilizing 5,10-methylenetetrahydrofolate (mTHF) as the methyl donor and reductant in the reaction, yielding dihydrofolate (DHF) as a by-product. This enzymatic reaction provides an intracellular de novo source of dTMP, an essential precursor for DNA biosynthesis. In Nitrosomonas eutropha (strain DSM 101675 / C91 / Nm57), this protein is Thymidylate synthase.